The following is a 126-amino-acid chain: Large ribosomal subunit protein bL17 (126 aa).

Belongs to the bacterial ribosomal protein bL17 family. In terms of assembly, part of the 50S ribosomal subunit. Contacts protein L32.

The polypeptide is Large ribosomal subunit protein bL17 (Vibrio parahaemolyticus serotype O3:K6 (strain RIMD 2210633)).